We begin with the raw amino-acid sequence, 475 residues long: Neuronal acetylcholine receptor subunit alpha-5 (475 aa).

An N-terminal signal peptide occupies residues M1 to G29. The Extracellular portion of the chain corresponds to R30–T261. Residues C177 and C191 are joined by a disulfide bond. Residues N190 and N236 are each glycosylated (N-linked (GlcNAc...) asparagine). Cysteines 241 and 242 form a disulfide. Transmembrane regions (helical) follow at residues L262–P282, I289–I309, and L324–I344. Topologically, residues H345–M437 are cytoplasmic. The chain crosses the membrane as a helical span at residues F438 to I458. At Y459 to K475 the chain is on the extracellular side.

Belongs to the ligand-gated ion channel (TC 1.A.9) family. Acetylcholine receptor (TC 1.A.9.1) subfamily. Alpha-5/CHRNA5 sub-subfamily. Neuronal AChR that forms heteropentamers composed of two different type of subunits: alpha and non-alpha (beta). CHRNA5/alpha-5 subunit is only able to form functional nAChRs when co-assembled with another alpha subunit, can be combined to CHRNA4/alpha-4 or CHRNA3/alpha-3 and CHRNB4/beta-4 or CHRNB2/beta-2 to give rise to functional receptors. Interacts with LYPD6.

The protein resides in the synaptic cell membrane. It is found in the cell membrane. It carries out the reaction Ca(2+)(in) = Ca(2+)(out). It catalyses the reaction K(+)(in) = K(+)(out). The enzyme catalyses Na(+)(in) = Na(+)(out). With respect to regulation, activated by a myriad of ligands such as acetylcholine, cytisine, nicotine, choline and epibatidine. Its function is as follows. Component of neuronal acetylcholine receptors (nAChRs) that function as pentameric, ligand-gated cation channels with high calcium permeability among other activities. nAChRs are excitatory neurotrasnmitter receptors formed by a collection of nAChR subunits known to mediate synaptic transmission in the nervous system and the neuromuscular junction. Each nAchR subunit confers differential attributes to channel properties, including activation, deactivation and desensitization kinetics, pH sensitivity, cation permeability, and binding to allosteric modulators. Has an accessory rather than functional role and is only able to form functional nAChRs when co-assembled with another beta subunit. Participates in pentameric assemblies along with CHRNA3, CHRNA4, CHRNB2 and CHRNB4. Increases receptor sensitivity to acetylcholine and nicotine when associated with CHRNA4 and CHRNB2. Plays a role in nicotine addiction. In Bos taurus (Bovine), this protein is Neuronal acetylcholine receptor subunit alpha-5 (CHRNA5).